The sequence spans 510 residues: Global transcription regulator sge1 (510 aa).

Disordered regions lie at residues 94–152, 393–438, and 469–510; these read PPGE…ASRN, HPFM…QQHS, and LGGT…MGRL. The segment covering 123 to 143 has biased composition (low complexity); it reads NTGMNGTATGANAANLSSAGS. 2 stretches are compositionally biased toward polar residues: residues 471–480 and 501–510; these read GTNTDQSQPF and PGSNNSMGRL.

The protein belongs to the MIT1/WOR1 family.

It is found in the nucleus. In terms of biological role, global transcriptional regulator of pathogenicity. Differentially regulates expression of effector genes. Also required for radial growth and production of asexual conidiospores, and plays a role in mycelium pigmentation. Not required for induction of Ave1, the effector that activates resistance mediated by the Ve1 immune receptor in tomato. In Verticillium dahliae (strain VdLs.17 / ATCC MYA-4575 / FGSC 10137) (Verticillium wilt), this protein is Global transcription regulator sge1.